Reading from the N-terminus, the 699-residue chain is MDLKFATFSSEIELPFYSALFSSKLDHDKLDSSARPVLGLYEPRSQANPEASTRMQILGSALTSDQDESGPLGMTRAEGYIKNVNTIEEFKNTDKNAMIKKAGEQIWDAIQDGTIYSCPSLLASFRILSYADLKKYRFTYWFAFPALHSEPQWKRTEPIGRLNSDESTALVERIGTWRYMVDRREHGFFLAKKVRGEASGPRSSLDDPGVDIGYRWDIGSLRDFETGFFNDAAEEDRYVAFVDPSNYPEYPSWPLRNLLILVRQRYRLNKVQILCYRDTQPRRHEARSIILPLAMDQVGDVELKSMPKVTGWERNGNGDLRPRVANLAEYMDPTRLADQAVDLNLKLMKWRLAPNLDLDTIKNTKCLLLGAGTLGSYVSRNLLGWGVRKITFIDYGSVSFSNPVRQPLFKFEDCHNGGKPKAIQAAEALREIYPGVDVEGYALSVPMLDHPIHNEAKTKAEFDKLKELIDSHDAIFLLMDTRESRWLPTLMGKAANKIVMNAALGFDTYVVMRHGAKPLDDSEDTLGCYFCNDVVVAADSMKDQTLDQQCTVTRPGVAAIASALLVELLTSILQHPLKQHAPAPISAGTGSAVSYERDPHDHPLGLVPHQVRGFLSNFQNMIIRGKSYPQCSACSKPVLDAYREGGWDFVKTALASRDYVAELSGLAEVQRLAEKAAAEMQWSEDEEGMGEEEGEGELI.

A GXGXXG motif motif is present at residues glycine 370–glycine 375. Cysteine 550 acts as the Glycyl thioester intermediate in catalysis. A homodimerization region spans residues alanine 653–glutamate 691.

The protein belongs to the ATG7 family. In terms of assembly, homodimer. Interacts with ATG8 through a thioester bond between Cys-550 and the C-terminal Gly of ATG8 and with ATG12 through a thioester bond between Cys-550 and the C-terminal Gly of ATG12. Also interacts with ATG3.

The protein localises to the cytoplasm. It is found in the preautophagosomal structure. Its function is as follows. E1-like activating enzyme involved in the 2 ubiquitin-like systems required for cytoplasm to vacuole transport (Cvt) and autophagy. Activates ATG12 for its conjugation with ATG5 and ATG8 for its conjugation with phosphatidylethanolamine. Both systems are needed for the ATG8 association to Cvt vesicles and autophagosomes membranes. Autophagy is essential for maintenance of amino acid levels and protein synthesis under nitrogen starvation. Required for selective autophagic degradation of the nucleus (nucleophagy) as well as for mitophagy which contributes to regulate mitochondrial quantity and quality by eliminating the mitochondria to a basal level to fulfill cellular energy requirements and preventing excess ROS production. Required for normal mycelial growth and conidiogenesis. This Sordaria macrospora (strain ATCC MYA-333 / DSM 997 / K(L3346) / K-hell) protein is Ubiquitin-like modifier-activating enzyme ATG7.